The following is a 229-amino-acid chain: Thylakoid lumenal 19 kDa protein, chloroplastic (229 aa).

It localises to the plastid. The protein localises to the chloroplast thylakoid lumen. In Arabidopsis thaliana (Mouse-ear cress), this protein is Thylakoid lumenal 19 kDa protein, chloroplastic.